Reading from the N-terminus, the 242-residue chain is Protein HTATIP2 (242 aa).

Alanine 2 is subject to N-acetylalanine. Residues 2 to 25 are required for interaction with elongation factor EEF1A1; the sequence is AETEALSKLREDFRMQNKSVFILG. NADPH-binding residues include serine 27, glycine 28, glutamate 29, threonine 30, arginine 52, arginine 53, leucine 92, glycine 93, tyrosine 143, lysine 147, and arginine 178. Tyrosine 143 serves as the catalytic Proton acceptor. Lysine 147 is an active-site residue.

In terms of assembly, monomer. Forms homodimers during oxidative stress. Interacts (via N-terminus) with elongation factor EEF1A1 (via middle-region); the interaction is direct and competes with EEF1A1 binding to guanyl-nucleotide exchange factor EEF1B2, thereby inhibiting GDP for GTP exchange and reactivation of EEF1A1. Interacts with nuclear transport receptors XPO4, IPO5/RANBP5, IPO7, IPO9 and KPNB1 as well as GCN1L1/GCN1 and LRPPRC probably through their HEAT repeats. Binds NCOA5/CIA.

It is found in the cytoplasm. Its function is as follows. Represses translation by preventing reactivation of elongation factor eEF1A. May also inhibit nuclear import by competing with nuclear import substrates for binding to a subset of nuclear transport receptors. Has additionally been proposed to act as a redox sensor involved in cellular oxidative stress surveillance. In Pan paniscus (Pygmy chimpanzee), this protein is Protein HTATIP2 (HTATIP2).